Consider the following 200-residue polypeptide: Dephospho-CoA kinase (200 aa).

A DPCK domain is found at Arg-3–Asn-200. Gly-11–Thr-16 contributes to the ATP binding site.

This sequence belongs to the CoaE family.

It is found in the cytoplasm. The enzyme catalyses 3'-dephospho-CoA + ATP = ADP + CoA + H(+). It functions in the pathway cofactor biosynthesis; coenzyme A biosynthesis; CoA from (R)-pantothenate: step 5/5. Catalyzes the phosphorylation of the 3'-hydroxyl group of dephosphocoenzyme A to form coenzyme A. The sequence is that of Dephospho-CoA kinase from Corynebacterium glutamicum (strain ATCC 13032 / DSM 20300 / JCM 1318 / BCRC 11384 / CCUG 27702 / LMG 3730 / NBRC 12168 / NCIMB 10025 / NRRL B-2784 / 534).